Reading from the N-terminus, the 253-residue chain is Indole-3-glycerol phosphate synthase (253 aa).

It belongs to the TrpC family.

It catalyses the reaction 1-(2-carboxyphenylamino)-1-deoxy-D-ribulose 5-phosphate + H(+) = (1S,2R)-1-C-(indol-3-yl)glycerol 3-phosphate + CO2 + H2O. It participates in amino-acid biosynthesis; L-tryptophan biosynthesis; L-tryptophan from chorismate: step 4/5. This is Indole-3-glycerol phosphate synthase from Bacillus thuringiensis (strain Al Hakam).